The primary structure comprises 161 residues: Putative pre-16S rRNA nuclease (161 aa).

The protein belongs to the YqgF nuclease family.

Its subcellular location is the cytoplasm. In terms of biological role, could be a nuclease involved in processing of the 5'-end of pre-16S rRNA. In Prochlorococcus marinus (strain MIT 9313), this protein is Putative pre-16S rRNA nuclease.